Consider the following 187-residue polypeptide: Endoribonuclease YbeY (187 aa).

H148, H152, and H158 together coordinate Zn(2+).

Belongs to the endoribonuclease YbeY family. Zn(2+) serves as cofactor.

Its subcellular location is the cytoplasm. Its function is as follows. Single strand-specific metallo-endoribonuclease involved in late-stage 70S ribosome quality control and in maturation of the 3' terminus of the 16S rRNA. In Ralstonia nicotianae (strain ATCC BAA-1114 / GMI1000) (Ralstonia solanacearum), this protein is Endoribonuclease YbeY.